Reading from the N-terminus, the 514-residue chain is tRNA-2-methylthio-N(6)-dimethylallyladenosine synthase (514 aa).

The disordered stretch occupies residues Met-1–Ala-21. The region spanning Arg-68 to Leu-186 is the MTTase N-terminal domain. Cys-77, Cys-113, Cys-147, Cys-223, Cys-227, and Cys-230 together coordinate [4Fe-4S] cluster. One can recognise a Radical SAM core domain in the interval Arg-209–Ala-440. The 64-residue stretch at Ser-442–Lys-505 folds into the TRAM domain.

It belongs to the methylthiotransferase family. MiaB subfamily. Monomer. It depends on [4Fe-4S] cluster as a cofactor.

It localises to the cytoplasm. It carries out the reaction N(6)-dimethylallyladenosine(37) in tRNA + (sulfur carrier)-SH + AH2 + 2 S-adenosyl-L-methionine = 2-methylsulfanyl-N(6)-dimethylallyladenosine(37) in tRNA + (sulfur carrier)-H + 5'-deoxyadenosine + L-methionine + A + S-adenosyl-L-homocysteine + 2 H(+). In terms of biological role, catalyzes the methylthiolation of N6-(dimethylallyl)adenosine (i(6)A), leading to the formation of 2-methylthio-N6-(dimethylallyl)adenosine (ms(2)i(6)A) at position 37 in tRNAs that read codons beginning with uridine. This Staphylococcus aureus (strain N315) protein is tRNA-2-methylthio-N(6)-dimethylallyladenosine synthase.